The sequence spans 104 residues: Thioredoxin (104 aa).

The region spanning 2–104 (AIVKVTDSNF…NLAEVIEKHL (103 aa)) is the Thioredoxin domain. Cysteine 29 and cysteine 32 are oxidised to a cystine.

The protein belongs to the thioredoxin family.

Functionally, component of the thioredoxin-thioredoxin reductase system. Participates in various redox reactions through the reversible oxidation of its active center dithiol to a disulfide and catalyzes dithiol-disulfide exchange reactions. The sequence is that of Thioredoxin (trxA) from Staphylococcus saprophyticus subsp. saprophyticus (strain ATCC 15305 / DSM 20229 / NCIMB 8711 / NCTC 7292 / S-41).